The primary structure comprises 282 residues: Peptidoglycan-recognition protein LD (282 aa).

The segment at 1–29 (MDSSHIAVRVARRSPSPAAVSQSSYGSLG) is disordered. Over 1 to 88 (MDSSHIAVRV…RRNPTLHEDC (88 aa)) the chain is Cytoplasmic. A helical membrane pass occupies residues 89–111 (FNWRSVGLLVMCASALALAAYLL). Over 112–282 (WRQTQTPDFG…PHYASHQTSK (171 aa)) the chain is Extracellular. Cys-162 and Cys-166 are oxidised to a cystine. The N-linked (GlcNAc...) asparagine glycan is linked to Asn-222.

Belongs to the N-acetylmuramoyl-L-alanine amidase 2 family. As to expression, expressed in uninduced hemocytes and mbn-2 cells.

It is found in the cell membrane. In terms of biological role, peptidoglycan-recognition protein probably involved in innate immunity by binding to peptidoglycans (PGN) of bacteria and activating the immune response. This chain is Peptidoglycan-recognition protein LD (PGRP-LD), found in Drosophila melanogaster (Fruit fly).